The primary structure comprises 361 residues: Probable dual-specificity RNA methyltransferase RlmN (361 aa).

The active-site Proton acceptor is Glu-102. A Radical SAM core domain is found at 108-344 (SGDRLTVCVS…VRWSKGLGAD (237 aa)). The cysteines at positions 115 and 347 are disulfide-linked. Cys-122, Cys-126, and Cys-129 together coordinate [4Fe-4S] cluster. S-adenosyl-L-methionine is bound by residues 169 to 170 (GE), Ser-199, 228 to 230 (SLH), and Asn-304. The active-site S-methylcysteine intermediate is the Cys-347.

This sequence belongs to the radical SAM superfamily. RlmN family. [4Fe-4S] cluster serves as cofactor.

The protein localises to the cytoplasm. The enzyme catalyses adenosine(2503) in 23S rRNA + 2 reduced [2Fe-2S]-[ferredoxin] + 2 S-adenosyl-L-methionine = 2-methyladenosine(2503) in 23S rRNA + 5'-deoxyadenosine + L-methionine + 2 oxidized [2Fe-2S]-[ferredoxin] + S-adenosyl-L-homocysteine. It carries out the reaction adenosine(37) in tRNA + 2 reduced [2Fe-2S]-[ferredoxin] + 2 S-adenosyl-L-methionine = 2-methyladenosine(37) in tRNA + 5'-deoxyadenosine + L-methionine + 2 oxidized [2Fe-2S]-[ferredoxin] + S-adenosyl-L-homocysteine. Functionally, specifically methylates position 2 of adenine 2503 in 23S rRNA and position 2 of adenine 37 in tRNAs. This is Probable dual-specificity RNA methyltransferase RlmN from Synechococcus elongatus (strain ATCC 33912 / PCC 7942 / FACHB-805) (Anacystis nidulans R2).